We begin with the raw amino-acid sequence, 85 residues long: Large ribosomal subunit protein bL27 (85 aa).

Residues methionine 1 to glycine 22 are disordered.

This sequence belongs to the bacterial ribosomal protein bL27 family.

The chain is Large ribosomal subunit protein bL27 from Vibrio atlanticus (strain LGP32) (Vibrio splendidus (strain Mel32)).